A 232-amino-acid polypeptide reads, in one-letter code: Mediator of RNA polymerase II transcription subunit 18 (232 aa).

Belongs to the Mediator complex subunit 18 family. In terms of assembly, component of the Mediator complex.

It localises to the nucleus. In terms of biological role, component of the Mediator complex, a coactivator involved in the regulated transcription of nearly all RNA polymerase II-dependent genes. Mediator functions as a bridge to convey information from gene-specific regulatory proteins to the basal RNA polymerase II transcription machinery. Mediator is recruited to promoters by direct interactions with regulatory proteins and serves as a scaffold for the assembly of a functional preinitiation complex with RNA polymerase II and the general transcription factors. This is Mediator of RNA polymerase II transcription subunit 18 (mdt-18) from Caenorhabditis elegans.